A 206-amino-acid polypeptide reads, in one-letter code: Ribonuclease HII (206 aa).

An RNase H type-2 domain is found at Ala-19–Glu-206. A divalent metal cation is bound by residues Asp-25, Glu-26, and Asp-117.

The protein belongs to the RNase HII family. The cofactor is Mn(2+). Mg(2+) is required as a cofactor.

The protein localises to the cytoplasm. It carries out the reaction Endonucleolytic cleavage to 5'-phosphomonoester.. Its function is as follows. Endonuclease that specifically degrades the RNA of RNA-DNA hybrids. In Vibrio cholerae serotype O1 (strain M66-2), this protein is Ribonuclease HII.